Here is a 497-residue protein sequence, read N- to C-terminus: Cytochrome P450 71A14 (497 aa).

Residues methionine 3 to leucine 23 traverse the membrane as a helical segment. Residue cysteine 440 coordinates heme.

This sequence belongs to the cytochrome P450 family. Requires heme as cofactor.

The protein localises to the membrane. The sequence is that of Cytochrome P450 71A14 (CYP71A14) from Arabidopsis thaliana (Mouse-ear cress).